The primary structure comprises 159 residues: Keratin-associated protein 9-8 (159 aa).

15 consecutive repeat copies span residues 8-12, 13-17, 32-36, 37-41, 46-50, 51-55, 56-60, 65-69, 70-74, 75-79, 80-84, 129-133, 134-138, 139-142, and 153-157. The segment at 8 to 157 is 15 X 5 AA repeats of C-C-[RQVSGE]-[SPSNQ]-[TASPI]; that stretch reads CCQPTCCRTT…TCVSSCCQPS (150 aa).

It belongs to the KRTAP type 9 family. Interacts with hair keratins.

Functionally, in the hair cortex, hair keratin intermediate filaments are embedded in an interfilamentous matrix, consisting of hair keratin-associated proteins (KRTAP), which are essential for the formation of a rigid and resistant hair shaft through their extensive disulfide bond cross-linking with abundant cysteine residues of hair keratins. The matrix proteins include the high-sulfur and high-glycine-tyrosine keratins. This is Keratin-associated protein 9-8 (KRTAP9-8) from Homo sapiens (Human).